The sequence spans 358 residues: Protein PXR1 (358 aa).

Disordered stretches follow at residues 1–26 (MGLA…NNTS) and 146–342 (EVKT…KSAT). Residues 11–26 (KISNDPQNTTWANNTS) show a composition bias toward polar residues. The 55-residue stretch at 25 to 79 (TSRFGHRILTSQGWQPGDSLGASDAAHAAHYTVASQSHIRVLLKDDNLGLGAKRG) folds into the G-patch domain. 2 stretches are compositionally biased toward basic and acidic residues: residues 146–171 (EVKT…EDDR) and 199–217 (SMDL…SSKD). A compositionally biased stretch (basic residues) spans 218–227 (KKGKKSKKDK). The segment covering 287–299 (DVEDLSSESEDES) has biased composition (acidic residues). Residues 300 to 315 (TPSASRPATGTSTPTV) show a composition bias toward polar residues. Positions 328–339 (HSVRQKWIRSKK) are enriched in basic residues.

It belongs to the PINX1 family.

The protein resides in the nucleus. It localises to the nucleolus. Its function is as follows. Involved in rRNA-processing at A0, A1 and A2 sites and negatively regulates telomerase. The polypeptide is Protein PXR1 (PXR1) (Phaeosphaeria nodorum (strain SN15 / ATCC MYA-4574 / FGSC 10173) (Glume blotch fungus)).